Reading from the N-terminus, the 67-residue chain is Large ribosomal subunit protein bL32c (67 aa).

Belongs to the bacterial ribosomal protein bL32 family.

It localises to the plastid. The protein localises to the chloroplast. The sequence is that of Large ribosomal subunit protein bL32c from Chara vulgaris (Common stonewort).